The primary structure comprises 562 residues: T-complex protein 1 subunit epsilon (562 aa).

The protein belongs to the TCP-1 chaperonin family. Heterooligomeric complex of about 850 to 900 kDa that forms two stacked rings, 12 to 16 nm in diameter.

It localises to the cytoplasm. In terms of biological role, molecular chaperone; assists the folding of proteins upon ATP hydrolysis. Known to play a role, in vitro, in the folding of actin and tubulin. In yeast may play a role in mitotic spindle formation. This Saccharomyces cerevisiae (strain ATCC 204508 / S288c) (Baker's yeast) protein is T-complex protein 1 subunit epsilon (CCT5).